Consider the following 974-residue polypeptide: UvrABC system protein A (974 aa).

ATP is bound at residue 34-41; that stretch reads GLSGSGKS. 2 consecutive ABC transporter domains span residues 331 to 610 and 630 to 959; these read WARS…TNSL and ISKT…QFLK. An ATP-binding site is contributed by 663–670; sequence GVSGGGKS. The segment at 762–788 adopts a C4-type zinc-finger fold; sequence CEACQGDGVIKIEMHFLPDVYVTCDVC.

It belongs to the ABC transporter superfamily. UvrA family. Forms a heterotetramer with UvrB during the search for lesions.

Its subcellular location is the cytoplasm. Functionally, the UvrABC repair system catalyzes the recognition and processing of DNA lesions. UvrA is an ATPase and a DNA-binding protein. A damage recognition complex composed of 2 UvrA and 2 UvrB subunits scans DNA for abnormalities. When the presence of a lesion has been verified by UvrB, the UvrA molecules dissociate. The sequence is that of UvrABC system protein A from Brucella abortus (strain 2308).